A 355-amino-acid chain; its full sequence is MFTLSDFDFNLPPELIAQTALPDRTASRLLEVDGTVAPARLVDRHFTELPSCISAGDLLVFNDTKVLKARFFGQKASGGKIEVLIERVTGTHTALAQIRASKSPGAGTTLRLADAFDVTVGERVDPFFTLNFPEPCLDLIEQYGRLPLPPYIEHDPDATDETRYQTVYASNPGAVAAPTAGLHFDQPMLDRLDAMGVERATLTLHVGAGTFQPVRVDNIAEHKMHSEWYDLPQSLVDKIAATRARGGNVIAVGTTSMRALEAAARAADEAGRPLAATQAETDIFITPGYRFRVVDRLVTNFHLPKSTLLMLVSAFAGVETIRAAYRHAIEQRYRFFSYGDAMLLTRRDTPEAPLA.

It belongs to the QueA family. Monomer.

The protein localises to the cytoplasm. The catalysed reaction is 7-aminomethyl-7-carbaguanosine(34) in tRNA + S-adenosyl-L-methionine = epoxyqueuosine(34) in tRNA + adenine + L-methionine + 2 H(+). It participates in tRNA modification; tRNA-queuosine biosynthesis. Functionally, transfers and isomerizes the ribose moiety from AdoMet to the 7-aminomethyl group of 7-deazaguanine (preQ1-tRNA) to give epoxyqueuosine (oQ-tRNA). The polypeptide is S-adenosylmethionine:tRNA ribosyltransferase-isomerase (Burkholderia lata (strain ATCC 17760 / DSM 23089 / LMG 22485 / NCIMB 9086 / R18194 / 383)).